The following is a 150-amino-acid chain: Small ribosomal subunit protein bS6 (150 aa).

Residues 92–150 are disordered; it reads KGINKPAKPKKTFKKTFVARKFSRDDESKTHSTEEPRRANTKSTYKKSTSFSQDNKNKK. The segment covering 98 to 109 has biased composition (basic residues); it reads AKPKKTFKKTFV. Residues 113–129 are compositionally biased toward basic and acidic residues; the sequence is FSRDDESKTHSTEEPRR. Low complexity predominate over residues 132–141; sequence TKSTYKKSTS.

The protein belongs to the bacterial ribosomal protein bS6 family.

Functionally, binds together with bS18 to 16S ribosomal RNA. This chain is Small ribosomal subunit protein bS6, found in Mycoplasmopsis pulmonis (strain UAB CTIP) (Mycoplasma pulmonis).